A 201-amino-acid chain; its full sequence is Aminoglycoside N(6')-acetyltransferase type 1 (201 aa).

The 168-residue stretch at 25–192 folds into the N-acetyltransferase domain; it reads VTLRLMTEHD…PAVYMVQTRQ (168 aa). The substrate site is built by W51 and D154. N159 serves as a coordination point for acetyl-CoA.

In terms of assembly, homodimer.

The enzyme catalyses kanamycin B + acetyl-CoA = N(6')-acetylkanamycin B + CoA + H(+). Its function is as follows. Catalyzes the transfer of an acetyl group from acetyl-CoA to the 6'-amino group of aminoglycoside molecules conferring resistance to antibiotics containing the purpurosamine ring including amikacin. The protein is Aminoglycoside N(6')-acetyltransferase type 1 (aacA4) of Klebsiella pneumoniae.